Consider the following 90-residue polypeptide: uncharacterized protein (90 aa).

The chain crosses the membrane as a helical span at residues 46–62; it reads MALLVVFLVSLFACTTI.

It localises to the membrane. This is an uncharacterized protein from Haemophilus influenzae (strain ATCC 51907 / DSM 11121 / KW20 / Rd).